The chain runs to 304 residues: Myelin basic protein (304 aa).

Composition is skewed to basic and acidic residues over residues 1–12 (MGNHAGKRELNA) and 22–32 (NRGESEKKRNL). Positions 1-146 (MGNHAGKREL…QKRPSQRHGS (146 aa)) are disordered. Position 2 is an N-acetylalanine (Gly2). Over residues 51–65 (ANQNNGTSSQDTAVT) the composition is skewed to polar residues. Positions 95 to 113 (FSRDAPGREDNTFKDRPSE) are enriched in basic and acidic residues. At Ser96 the chain carries Phosphoserine. The span at 117-130 (LQTIQEDSAATSES) shows a compositional bias: polar residues. Residues Ser141 and Ser146 each carry the phosphoserine modification. The residue at position 148 (Tyr148) is a Phosphotyrosine. Residue Thr151 is modified to Phosphothreonine. Ser153 is modified (phosphoserine). A Phosphothreonine modification is found at Thr154. 2 positions are modified to citrulline; in form C8: Arg159 and Arg165. Arg167 is subject to Citrulline. Thr169 bears the Phosphothreonine mark. The residue at position 174 (Ser174) is a Phosphoserine. Omega-N-methylarginine occurs at positions 177 and 183. Residues 179 to 222 (FGGDRGAPKRGSGKDSHHPARTAHYGSLPQKSHGRTQDENPVVH) form an induces experimental autoimmune encephalomyelitis (EAE) 1 region. The segment at 180-249 (GGDRGAPKRG…GRGLSLSRFS (70 aa)) is disordered. A Phosphoserine modification is found at Ser190. At Arg199 the chain carries Citrulline. Tyr203 carries the post-translational modification Phosphotyrosine. Residue Ser210 is modified to Phosphoserine. 2 positions are modified to phosphothreonine: Thr214 and Thr229. Citrulline is present on Arg231. The residue at position 232 (Thr232) is a Phosphothreonine. A Deamidated glutamine modification is found at Gln237. Omega-N-methylarginine; alternate is present on Arg241. Arg241 carries the post-translational modification Symmetric dimethylarginine; alternate. The interval 246-256 (SRFSWGAEGQR) is induces experimental autoimmune encephalomyelitis (EAE) 2. Ser249 is subject to Phosphoserine. A citrulline; in form C8 mark is found at Arg256 and Arg264. Gln281 carries the deamidated glutamine modification. Arg293 carries the citrulline; in form C8 modification. Phosphoserine is present on Ser295. The residue at position 296 (Arg296) is a Citrulline. Ser299 is subject to Phosphoserine; by UHMK1. Arg303 is subject to Citrulline. Arg304 carries the citrulline; in form C8 modification.

The protein belongs to the myelin basic protein family. Homodimer. Isoform 3 exists as a homodimer. Several charge isomers of MBP; C1 (the most cationic, least modified, and most abundant form), C2, C3, C4, C5, C6, C7, C8-A and C8-B (the least cationic form); are produced as a result of optional PTM, such as phosphorylation, deamidation of glutamine or asparagine, arginine citrullination and methylation. C8-A and C8-B contain each two mass isoforms termed C8-A(H), C8-A(L), C8-B(H) and C8-B(L), (H) standing for higher and (L) for lower molecular weight. C3, C4 and C5 are phosphorylated. The ratio of methylated arginine residues decreases during aging, making the protein more cationic. In terms of processing, the N-terminal alanine is acetylated (isoform 3, isoform 4, isoform 5 and isoform 6). Post-translationally, arg-241 was found to be 6% monomethylated and 60% symmetrically dimethylated. Proteolytically cleaved in B cell lysosomes by cathepsin CTSG which degrades the major immunogenic MBP epitope and prevents the activation of MBP-specific autoreactive T cells. In terms of processing, phosphorylated by TAOK2, VRK2, MAPK11, MAPK12, MAPK14 and MINK1. MBP isoforms are found in both the central and the peripheral nervous system, whereas Golli-MBP isoforms are expressed in fetal thymus, spleen and spinal cord, as well as in cell lines derived from the immune system.

Its subcellular location is the myelin membrane. It localises to the nucleus. Its function is as follows. The classic group of MBP isoforms (isoform 4-isoform 14) are with PLP the most abundant protein components of the myelin membrane in the CNS. They have a role in both its formation and stabilization. The smaller isoforms might have an important role in remyelination of denuded axons in multiple sclerosis. The non-classic group of MBP isoforms (isoform 1-isoform 3/Golli-MBPs) may preferentially have a role in the early developing brain long before myelination, maybe as components of transcriptional complexes, and may also be involved in signaling pathways in T-cells and neural cells. Differential splicing events combined with optional post-translational modifications give a wide spectrum of isomers, with each of them potentially having a specialized function. Induces T-cell proliferation. The protein is Myelin basic protein (MBP) of Homo sapiens (Human).